The primary structure comprises 189 residues: Pyridoxal 5'-phosphate synthase subunit PdxT (189 aa).

50-52 is an L-glutamine binding site; it reads GES. Residue Cys-80 is the Nucleophile of the active site. Residues Arg-107 and 134–135 each bind L-glutamine; that span reads IR. Catalysis depends on charge relay system residues His-169 and Glu-171.

It belongs to the glutaminase PdxT/SNO family. In the presence of PdxS, forms a dodecamer of heterodimers. Only shows activity in the heterodimer.

The catalysed reaction is aldehydo-D-ribose 5-phosphate + D-glyceraldehyde 3-phosphate + L-glutamine = pyridoxal 5'-phosphate + L-glutamate + phosphate + 3 H2O + H(+). The enzyme catalyses L-glutamine + H2O = L-glutamate + NH4(+). It functions in the pathway cofactor biosynthesis; pyridoxal 5'-phosphate biosynthesis. Functionally, catalyzes the hydrolysis of glutamine to glutamate and ammonia as part of the biosynthesis of pyridoxal 5'-phosphate. The resulting ammonia molecule is channeled to the active site of PdxS. This Picrophilus torridus (strain ATCC 700027 / DSM 9790 / JCM 10055 / NBRC 100828 / KAW 2/3) protein is Pyridoxal 5'-phosphate synthase subunit PdxT.